The following is a 119-amino-acid chain: Enhancer of yellow 2 transcription factor (119 aa).

The disordered stretch occupies residues 93-119 (LTENETEGTDNHDDDEDDEDENGTEDN). Acidic residues predominate over residues 96 to 119 (NETEGTDNHDDDEDDEDENGTEDN).

Belongs to the ENY2 family. As to quaternary structure, component of the nuclear pore complex (NPC)-associated AMEX complex (anchoring and mRNA export complex), composed of at least e(y)2 and xmas-2. Component of the SAGA transcription coactivator-HAT complexes, at least composed of Ada2b, e(y)2, Pcaf/Gcn5, Taf10 and Nipped-A/Trrap. Within the SAGA complex, e(y)2, Sgf11, and not/nonstop form an additional subcomplex of SAGA called the DUB module (deubiquitination module). Component of the THO complex, composed of at least e(y)2, HPR1, THO2, THOC5, THOC6 and THOC7. Interacts with e(y)1. Interacts with su(Hw) (via zinc fingers). Interacts with xmas-2; required for localization to the nuclear periphery. Interacts with the nuclear pore complex (NPC).

It localises to the nucleus. It is found in the nucleoplasm. The protein resides in the cytoplasm. In terms of biological role, involved in mRNA export coupled transcription activation by association with both the AMEX and the SAGA complexes. The SAGA complex is a multiprotein complex that activates transcription by remodeling chromatin and mediating histone acetylation and deubiquitination. Within the SAGA complex, participates in a subcomplex that specifically deubiquitinates histone H2B. The SAGA complex is recruited to specific gene promoters by activators, where it is required for transcription. Required for nuclear receptor-mediated transactivation. Involved in transcription elongation by recruiting the THO complex onto nascent mRNA. The AMEX complex functions in docking export-competent ribonucleoprotein particles (mRNPs) to the nuclear entrance of the nuclear pore complex (nuclear basket). AMEX participates in mRNA export and accurate chromatin positioning in the nucleus by tethering genes to the nuclear periphery. The protein is Enhancer of yellow 2 transcription factor of Drosophila willistoni (Fruit fly).